Reading from the N-terminus, the 328-residue chain is Solute-binding protein Bamb_6123 (328 aa).

The N-terminal stretch at 1-26 (MTHRFPRSRTALAVALMAGFAMSAQA) is a signal peptide. Beta-D-galacturonate is bound by residues His35, Glu73, Arg89, Arg149, Asn209, and Glu236. Residues His35, Glu73, Arg89, Arg149, Asn209, and Glu236 each coordinate beta-D-glucuronate.

Belongs to the bacterial solute-binding protein 7 family. As to quaternary structure, the complex is comprised of an extracytoplasmic solute-binding protein and a heteromeric permease formed by two transmembrane proteins.

The protein localises to the periplasm. Solute-binding protein that binds D-galacturonate and D-glucuronate (in vitro). Probably part of a tripartite ATP-independent periplasmic (TRAP) transport system that mediates solute transport into the cytoplasm. The chain is Solute-binding protein Bamb_6123 from Burkholderia ambifaria (strain ATCC BAA-244 / DSM 16087 / CCUG 44356 / LMG 19182 / AMMD) (Burkholderia cepacia (strain AMMD)).